A 366-amino-acid chain; its full sequence is Chorismate synthase (366 aa).

Arg-48 provides a ligand contact to NADP(+). Residues Arg-125–Ser-127, Gly-285, Lys-300–Ser-304, and Arg-327 contribute to the FMN site.

Belongs to the chorismate synthase family. FMNH2 serves as cofactor.

The enzyme catalyses 5-O-(1-carboxyvinyl)-3-phosphoshikimate = chorismate + phosphate. The protein operates within metabolic intermediate biosynthesis; chorismate biosynthesis; chorismate from D-erythrose 4-phosphate and phosphoenolpyruvate: step 7/7. Catalyzes the anti-1,4-elimination of the C-3 phosphate and the C-6 proR hydrogen from 5-enolpyruvylshikimate-3-phosphate (EPSP) to yield chorismate, which is the branch point compound that serves as the starting substrate for the three terminal pathways of aromatic amino acid biosynthesis. This reaction introduces a second double bond into the aromatic ring system. The chain is Chorismate synthase from Methanococcoides burtonii (strain DSM 6242 / NBRC 107633 / OCM 468 / ACE-M).